The following is a 336-amino-acid chain: 3-isopropylmalate dehydrogenase (336 aa).

Substrate contacts are provided by arginine 87, arginine 97, arginine 121, and aspartate 211. Residues aspartate 211, aspartate 235, and aspartate 239 each coordinate Mg(2+). An NAD(+)-binding site is contributed by 271–283 (GSAPDIAGQGIAD).

This sequence belongs to the isocitrate and isopropylmalate dehydrogenases family. LeuB type 2 subfamily. Homodimer. The cofactor is Mg(2+). Requires Mn(2+) as cofactor.

Its subcellular location is the cytoplasm. The enzyme catalyses (2R,3S)-3-isopropylmalate + NAD(+) = 4-methyl-2-oxopentanoate + CO2 + NADH. It functions in the pathway amino-acid biosynthesis; L-leucine biosynthesis; L-leucine from 3-methyl-2-oxobutanoate: step 3/4. In terms of biological role, catalyzes the oxidation of 3-carboxy-2-hydroxy-4-methylpentanoate (3-isopropylmalate) to 3-carboxy-4-methyl-2-oxopentanoate. The product decarboxylates to 4-methyl-2 oxopentanoate. The chain is 3-isopropylmalate dehydrogenase from Mycolicibacterium vanbaalenii (strain DSM 7251 / JCM 13017 / BCRC 16820 / KCTC 9966 / NRRL B-24157 / PYR-1) (Mycobacterium vanbaalenii).